The following is a 326-amino-acid chain: Amino acid--[acyl-carrier-protein] ligase 1 (326 aa).

Residue C131 coordinates Zn(2+). Residues R159, E161, and 168-169 (RL) each bind ATP. E176 is a Zn(2+) binding site. An an L-alpha-amino acid-binding site is contributed by E176. ATP contacts are provided by residues K235 and 250–253 (ACMS). C279 is a Zn(2+) binding site. R286 serves as a coordination point for ATP.

Belongs to the class-II aminoacyl-tRNA synthetase family. Amino acid--[acyl-carrier-protein] ligase subfamily. In terms of assembly, homodimer. Zn(2+) is required as a cofactor.

It carries out the reaction an L-alpha-amino acid + holo-[ACP] + ATP = an L-alpha-aminoacyl-[ACP] + AMP + diphosphate. In terms of biological role, catalyzes the ATP-dependent activation of L-glycine and its transfer to the phosphopantetheine prosthetic group covalently attached to the vicinal carrier protein bsr0959 of yet unknown function. May participate in nonribosomal peptide synthesis or related processes. L-alanine is a poor substrate whereas L-serine or D-amino acids are not substrates for ATP-dependent activation. Does not display tRNA aminoacylation activity. This is Amino acid--[acyl-carrier-protein] ligase 1 from Bradyrhizobium diazoefficiens (strain JCM 10833 / BCRC 13528 / IAM 13628 / NBRC 14792 / USDA 110).